The chain runs to 88 residues: Homeobox protein knotted-1-like 3 (88 aa).

Residues glutamate 4 to leucine 24 form the ELK domain. A DNA-binding region (homeobox; TALE-type) is located at residues cysteine 25–serine 88.

It belongs to the TALE/KNOX homeobox family. As to expression, strongly expressed in ear inflorescence primordia and shoot meristem. Weakly expressed in embryos. Absent from leaves.

The protein localises to the nucleus. Probably binds to the DNA sequence 5'-TGAC-3'. This is Homeobox protein knotted-1-like 3 (KNOX3) from Zea mays (Maize).